We begin with the raw amino-acid sequence, 149 residues long: UPF0336 protein Lxx02810 (149 aa).

The protein belongs to the UPF0336 family.

The polypeptide is UPF0336 protein Lxx02810 (Leifsonia xyli subsp. xyli (strain CTCB07)).